The chain runs to 422 residues: Glutamate-1-semialdehyde 2,1-aminomutase (422 aa).

Residue lysine 264 is modified to N6-(pyridoxal phosphate)lysine.

It belongs to the class-III pyridoxal-phosphate-dependent aminotransferase family. HemL subfamily. In terms of assembly, homodimer. It depends on pyridoxal 5'-phosphate as a cofactor.

It localises to the cytoplasm. The catalysed reaction is (S)-4-amino-5-oxopentanoate = 5-aminolevulinate. The protein operates within porphyrin-containing compound metabolism; protoporphyrin-IX biosynthesis; 5-aminolevulinate from L-glutamyl-tRNA(Glu): step 2/2. In Clostridium acetobutylicum (strain ATCC 824 / DSM 792 / JCM 1419 / IAM 19013 / LMG 5710 / NBRC 13948 / NRRL B-527 / VKM B-1787 / 2291 / W), this protein is Glutamate-1-semialdehyde 2,1-aminomutase.